The chain runs to 261 residues: Aromatic peroxygenase (261 aa).

C36 lines the heme pocket. 4 N-linked (GlcNAc...) asparagine glycosylation sites follow: N100, N137, N141, and N220.

It belongs to the chloroperoxidase family. The cofactor is heme b. N-glycosylated.

In terms of biological role, aromatic peroxidase that oxidizes aryl alcohols into the corresponding aldehydes and then into the corresponding benzoic acids. Catalyzes the regioselective peroxide-dependent hydroxylation of naphthalene to 1-naphthol and to a far lesser extent 2-naphthol via a naphthalene 1,2-oxide intermediate. Halogenates phenol to 2-bromophenol and 4-bromophenol. Oxidizes the sulfur-containing heterocycle dibenzothiophene to yield sulfoxidation products, and trace amounts of ring-hydroxylation products. In Coprinellus radians (Coprophilous mushroom), this protein is Aromatic peroxygenase.